A 274-amino-acid polypeptide reads, in one-letter code: Large ribosomal subunit protein uL2 (274 aa).

Residues 223 to 274 (VAMNPVDHPHGGGEGKTSGGRHPVSPWGVPTKGYKTRSNKRTDKFIVRRRAK) form a disordered region.

Belongs to the universal ribosomal protein uL2 family. As to quaternary structure, part of the 50S ribosomal subunit. Forms a bridge to the 30S subunit in the 70S ribosome.

In terms of biological role, one of the primary rRNA binding proteins. Required for association of the 30S and 50S subunits to form the 70S ribosome, for tRNA binding and peptide bond formation. It has been suggested to have peptidyltransferase activity; this is somewhat controversial. Makes several contacts with the 16S rRNA in the 70S ribosome. The chain is Large ribosomal subunit protein uL2 from Colwellia psychrerythraea (strain 34H / ATCC BAA-681) (Vibrio psychroerythus).